We begin with the raw amino-acid sequence, 253 residues long: Probable transcriptional regulatory protein RAF_ORF0717 (253 aa).

The segment at 1–21 is disordered; the sequence is MAGHSKFKNIQHRKGAQDKKR.

Belongs to the TACO1 family.

The protein localises to the cytoplasm. The protein is Probable transcriptional regulatory protein RAF_ORF0717 of Rickettsia africae (strain ESF-5).